A 539-amino-acid polypeptide reads, in one-letter code: O-phosphoserine--tRNA(Cys) ligase (539 aa).

Substrate contacts are provided by residues histidine 188–threonine 190, serine 233–serine 235, tyrosine 275–tyrosine 276, and asparagine 327.

It belongs to the class-II aminoacyl-tRNA synthetase family. O-phosphoseryl-tRNA(Cys) synthetase subfamily. As to quaternary structure, homotetramer. Interacts with SepCysS.

The catalysed reaction is tRNA(Cys) + O-phospho-L-serine + ATP = O-phospho-L-seryl-tRNA(Cys) + AMP + diphosphate. In terms of biological role, catalyzes the attachment of O-phosphoserine (Sep) to tRNA(Cys). This chain is O-phosphoserine--tRNA(Cys) ligase, found in Methanosarcina barkeri (strain Fusaro / DSM 804).